The sequence spans 313 residues: Pantoate--beta-alanine ligase (313 aa).

36-43 (MGYLHQGH) provides a ligand contact to ATP. The Proton donor role is filled by His43. Gln71 lines the (R)-pantoate pocket. Gln71 contributes to the beta-alanine binding site. 178-181 (GKKD) is a binding site for ATP. Gln184 provides a ligand contact to (R)-pantoate. ATP is bound at residue 215 to 218 (MSSR).

It belongs to the pantothenate synthetase family. In terms of assembly, homodimer.

The protein resides in the cytoplasm. It is found in the cytosol. It carries out the reaction (R)-pantoate + beta-alanine + ATP = (R)-pantothenate + AMP + diphosphate + H(+). Its pathway is cofactor biosynthesis; (R)-pantothenate biosynthesis; (R)-pantothenate from (R)-pantoate and beta-alanine: step 1/1. Functionally, catalyzes the condensation of pantoate with beta-alanine to form pantothenate. Essential for panthotenate biosynthesis. This chain is Pantoate--beta-alanine ligase (PANC), found in Oryza sativa subsp. japonica (Rice).